The primary structure comprises 347 residues: Protein YIPF3 (347 aa).

The disordered stretch occupies residues 1 to 28 (MATQAAPASGVRNGAGPEWGGFEENIQG). Alanine 2 bears the N-acetylalanine mark. Residues 2–145 (ATQAAPASGV…PIKMVNFPQK (144 aa)) are Cytoplasmic-facing. A helical transmembrane segment spans residues 146–166 (VAGELYGPLMLVFTLVAILLH). The Lumenal segment spans residues 167 to 184 (GMKTSDTIIREGTLMGTA). The helical transmembrane segment at 185–205 (IGTCFGYWLGVSSFIYFLAYL) threads the bilayer. Residues 206-211 (CNAQIT) are Cytoplasmic-facing. A helical membrane pass occupies residues 212–234 (MLQMLALLGYGLFGHCIVLFITY). Topologically, residues 235–237 (NIH) are lumenal. The chain crosses the membrane as a helical span at residues 238-260 (LHALFYLFWLLLGGLSTLRMVAV). At 261–271 (LVSRTVGPTQR) the chain is on the cytoplasmic side. Residues 272 to 292 (LLLCGTLAALHMLFLLYLHFA) traverse the membrane as a helical segment. The Lumenal segment spans residues 293-347 (YHKVVEGILDTLEGPNIPPMQRVPRDIPAVLPAAKLPVAVVNATAKAIAVTLQSH). A glycan (N-linked (GlcNAc...) asparagine) is linked at asparagine 334.

The protein belongs to the YIP1 family. In terms of assembly, interacts with YIPF4 and YIPF5.

It is found in the cell membrane. The protein localises to the golgi apparatus. Its subcellular location is the cis-Golgi network membrane. The protein resides in the cytoplasm. In terms of biological role, involved in the maintenance of the Golgi structure. May play a role in hematopoiesis. The sequence is that of Protein YIPF3 (Yipf3) from Rattus norvegicus (Rat).